We begin with the raw amino-acid sequence, 184 residues long: RNA polymerase sigma factor HrpL (184 aa).

A Polymerase core binding motif is present at residues 49-62 (DILQCVFLEALRNE). Residues 151 to 170 (YQETANTLGVPIGTVRSRLS) constitute a DNA-binding region (H-T-H motif).

Belongs to the sigma-70 factor family. ECF subfamily.

Its function is as follows. Sigma factors are initiation factors that promote the attachment of RNA polymerase to specific initiation sites and are then released. This sigma factor is involved in the activation of hprD as well as other hrp loci which are involved in plant pathogenicity, hrmA and avr genes. The protein is RNA polymerase sigma factor HrpL (hrpL) of Pseudomonas syringae pv. syringae.